A 555-amino-acid chain; its full sequence is Glutamine--tRNA ligase (555 aa).

Residues 34–44 (PEPNGYLHIGH) carry the 'HIGH' region motif. ATP-binding positions include 35 to 37 (EPN) and 41 to 47 (HIGHAKS). L-glutamine is bound by residues aspartate 67 and tyrosine 212. ATP contacts are provided by residues threonine 231, 261–262 (RL), and 269–271 (MSK). The short motif at 268-272 (IMSKR) is the 'KMSKS' region element.

It belongs to the class-I aminoacyl-tRNA synthetase family. In terms of assembly, monomer.

The protein localises to the cytoplasm. The enzyme catalyses tRNA(Gln) + L-glutamine + ATP = L-glutaminyl-tRNA(Gln) + AMP + diphosphate. In Yersinia pseudotuberculosis serotype O:1b (strain IP 31758), this protein is Glutamine--tRNA ligase.